Reading from the N-terminus, the 141-residue chain is Hemoglobin subunit alpha (141 aa).

The Globin domain occupies valine 1 to arginine 141. Serine 3 carries the post-translational modification Phosphoserine. Residue lysine 7 is modified to N6-succinyllysine. At threonine 8 the chain carries Phosphothreonine. The residue at position 11 (lysine 11) is an N6-succinyllysine. The residue at position 16 (lysine 16) is an N6-acetyllysine; alternate. Lysine 16 bears the N6-succinyllysine; alternate mark. The residue at position 24 (tyrosine 24) is a Phosphotyrosine. Position 35 is a phosphoserine (serine 35). Lysine 40 carries the N6-succinyllysine modification. At serine 49 the chain carries Phosphoserine. An O2-binding site is contributed by histidine 58. Heme b is bound at residue histidine 87. Serine 102 bears the Phosphoserine mark. Residue threonine 108 is modified to Phosphothreonine. A Phosphoserine modification is found at serine 124. Residues threonine 134 and threonine 137 each carry the phosphothreonine modification. Serine 138 is subject to Phosphoserine.

This sequence belongs to the globin family. Heterotetramer of two alpha chains and two beta chains. Red blood cells.

In terms of biological role, involved in oxygen transport from the lung to the various peripheral tissues. This chain is Hemoglobin subunit alpha, found in Blarina brevicauda (Northern short-tailed shrew).